The following is an 842-amino-acid chain: Alpha-glucan phosphorylase, H isozyme (842 aa).

Residue lysine 688 is modified to N6-(pyridoxal phosphate)lysine.

The protein belongs to the glycogen phosphorylase family. Requires pyridoxal 5'-phosphate as cofactor.

The protein localises to the cytoplasm. It carries out the reaction [(1-&gt;4)-alpha-D-glucosyl](n) + phosphate = [(1-&gt;4)-alpha-D-glucosyl](n-1) + alpha-D-glucose 1-phosphate. Functionally, phosphorylase is an important allosteric enzyme in carbohydrate metabolism. Enzymes from different sources differ in their regulatory mechanisms and in their natural substrates. However, all known phosphorylases share catalytic and structural properties. In terms of biological role, the H isoform exhibits higher affinity for branched polyglucans such as soluble starch or glycogen. In Vicia faba (Broad bean), this protein is Alpha-glucan phosphorylase, H isozyme.